We begin with the raw amino-acid sequence, 278 residues long: MPAPATYATGLTPLPTPVPKVSKNIMERFSLKGKVASITGSSSGIGFAVAEAFAQAGADVAIWYNSKPSDEKAEYLSKTYGVRSKAYKCAVTNAKQVETTIQTIEKDFGKIDIFIANAGIPWTAGPMIDVPNNEEWDKVVDLDLNGAYYCAKYAGQIFKKQGYGSFIFTASMSGHIVNIPQMQACYNAAKCAVLHLSRSLAVEWAGFARCNTVSPGYMATEISDFIPRDTKEKWWQLIPMGREGDPSELAGAYIYLASDASTYTTGADILVDGGYCCP.

Residues isoleucine 45, asparagine 117, and lysine 152 each contribute to the NADP(+) site. Residues serine 171 and tyrosine 186 each act as proton donor in the active site. Residues tyrosine 186, lysine 190, and threonine 220 each contribute to the NADP(+) site. The active-site Lowers pKa of active site Tyr is the lysine 190.

Belongs to the short-chain dehydrogenases/reductases (SDR) family. Homotetramer.

The enzyme catalyses D-mannitol + NADP(+) = D-fructose + NADPH + H(+). Functionally, versatile oxidoreductase that catalyzes the oxidation and reduction of polar as well as non-polar substrates at a very broad pH range. Preferentially oxidizes secondary alcohols. Has highest activity for racemic 2-heptanol and racemic octanol. Is also an efficient reductase for selected substrates. Substrate selectivity was found for medium chain length ketones with the carbonyl function at position C-2. Has highest activities for ribulose and fructose. The enzyme is (R)-selective in the reduction direction and produces exclusively the (R)-enantiomer. This is Probable NADP-dependent mannitol dehydrogenase from Yarrowia lipolytica (strain CLIB 122 / E 150) (Yeast).